The sequence spans 212 residues: Adenylate kinase (212 aa).

Position 10-15 (10-15 (GAGKGT)) interacts with ATP. Residues 30–59 (STGDMFRAAMANQTEMGVLAKSYIDKGELV) form an NMP region. AMP-binding positions include T31, R36, 57–59 (ELV), 86–89 (GYPR), and Q93. The interval 127-159 (GRIIHRQTGETFHKVFNPPANYNEEDYYQREDD) is LID. ATP contacts are provided by residues R128 and 137-138 (TF). Residues R156 and R167 each coordinate AMP. Position 195 (Q195) interacts with ATP.

The protein belongs to the adenylate kinase family. In terms of assembly, monomer.

Its subcellular location is the cytoplasm. It catalyses the reaction AMP + ATP = 2 ADP. Its pathway is purine metabolism; AMP biosynthesis via salvage pathway; AMP from ADP: step 1/1. In terms of biological role, catalyzes the reversible transfer of the terminal phosphate group between ATP and AMP. Plays an important role in cellular energy homeostasis and in adenine nucleotide metabolism. The polypeptide is Adenylate kinase (Streptococcus gordonii (strain Challis / ATCC 35105 / BCRC 15272 / CH1 / DL1 / V288)).